The sequence spans 232 residues: 5'-methylthioadenosine/S-adenosylhomocysteine nucleosidase (232 aa).

Residue E12 is the Proton acceptor of the active site. Substrate-binding positions include G78, I152, and 173–174 (ME). The active-site Proton donor is D197.

It belongs to the PNP/UDP phosphorylase family. MtnN subfamily. Homodimer.

It carries out the reaction S-adenosyl-L-homocysteine + H2O = S-(5-deoxy-D-ribos-5-yl)-L-homocysteine + adenine. The enzyme catalyses S-methyl-5'-thioadenosine + H2O = 5-(methylsulfanyl)-D-ribose + adenine. The catalysed reaction is 5'-deoxyadenosine + H2O = 5-deoxy-D-ribose + adenine. The protein operates within amino-acid biosynthesis; L-methionine biosynthesis via salvage pathway; S-methyl-5-thio-alpha-D-ribose 1-phosphate from S-methyl-5'-thioadenosine (hydrolase route): step 1/2. Functionally, catalyzes the irreversible cleavage of the glycosidic bond in both 5'-methylthioadenosine (MTA) and S-adenosylhomocysteine (SAH/AdoHcy) to adenine and the corresponding thioribose, 5'-methylthioribose and S-ribosylhomocysteine, respectively. Also cleaves 5'-deoxyadenosine, a toxic by-product of radical S-adenosylmethionine (SAM) enzymes, into 5-deoxyribose and adenine. Thus, is required for in vivo function of the radical SAM enzymes biotin synthase and lipoic acid synthase, that are inhibited by 5'-deoxyadenosine accumulation. The polypeptide is 5'-methylthioadenosine/S-adenosylhomocysteine nucleosidase (Salmonella paratyphi A (strain ATCC 9150 / SARB42)).